A 428-amino-acid polypeptide reads, in one-letter code: Immunoglobulin superfamily containing leucine-rich repeat protein (428 aa).

The N-terminal stretch at 1–18 is a signal peptide; the sequence is MQELHLLWWALLLGLAQA. The LRRNT domain maps to 19–50; it reads CPEPCDCGEKYGFQIADCAYRDLESVPPGFPA. An N-linked (GlcNAc...) asparagine glycan is attached at N51. LRR repeat units lie at residues 51–72, 75–96, 99–122, 123–144, and 147–168; these read NVTT…AFRE, LLQS…ALAS, HLKS…HNLS, ALQL…AFRS, and ALRS…TFTP. One can recognise an LRRCT domain in the interval 180–231; that stretch reads NPFDCTCGIVWLKTWALTTAVSIPEQDNIACTSPHVLKGTPLSRLPPLPCSA. The region spanning 232–343 is the Ig-like domain; it reads PSVQLSYQPS…GSAESSVDVA (112 aa). An intrachain disulfide couples C257 to C327. N309 carries an N-linked (GlcNAc...) asparagine glycan.

Expressed in various tissues including retina, heart, skeletal muscle, prostate, ovary, small intestine, thyroid, adrenal cortex, testis, stomach and spinal cord.

The protein localises to the secreted. The chain is Immunoglobulin superfamily containing leucine-rich repeat protein (ISLR) from Homo sapiens (Human).